We begin with the raw amino-acid sequence, 227 residues long: Biosynthetic peptidoglycan transglycosylase (227 aa).

Residues 7 to 27 (VALLTLLLLVAAPYVLTLVYG) form a helical membrane-spanning segment.

It belongs to the glycosyltransferase 51 family.

Its subcellular location is the cell inner membrane. The catalysed reaction is [GlcNAc-(1-&gt;4)-Mur2Ac(oyl-L-Ala-gamma-D-Glu-L-Lys-D-Ala-D-Ala)](n)-di-trans,octa-cis-undecaprenyl diphosphate + beta-D-GlcNAc-(1-&gt;4)-Mur2Ac(oyl-L-Ala-gamma-D-Glu-L-Lys-D-Ala-D-Ala)-di-trans,octa-cis-undecaprenyl diphosphate = [GlcNAc-(1-&gt;4)-Mur2Ac(oyl-L-Ala-gamma-D-Glu-L-Lys-D-Ala-D-Ala)](n+1)-di-trans,octa-cis-undecaprenyl diphosphate + di-trans,octa-cis-undecaprenyl diphosphate + H(+). Its pathway is cell wall biogenesis; peptidoglycan biosynthesis. Peptidoglycan polymerase that catalyzes glycan chain elongation from lipid-linked precursors. The sequence is that of Biosynthetic peptidoglycan transglycosylase from Rhodopseudomonas palustris (strain HaA2).